The primary structure comprises 271 residues: 4-hydroxy-tetrahydrodipicolinate reductase (271 aa).

Residues 10 to 15, glutamate 36, 100 to 102, and 124 to 127 each bind NAD(+); these read GAGGRM, GTT, and SGNM. Histidine 157 functions as the Proton donor/acceptor in the catalytic mechanism. Histidine 158 provides a ligand contact to (S)-2,3,4,5-tetrahydrodipicolinate. Lysine 161 serves as the catalytic Proton donor. Residue 167-168 coordinates (S)-2,3,4,5-tetrahydrodipicolinate; sequence GT.

It belongs to the DapB family.

It localises to the cytoplasm. It catalyses the reaction (S)-2,3,4,5-tetrahydrodipicolinate + NAD(+) + H2O = (2S,4S)-4-hydroxy-2,3,4,5-tetrahydrodipicolinate + NADH + H(+). It carries out the reaction (S)-2,3,4,5-tetrahydrodipicolinate + NADP(+) + H2O = (2S,4S)-4-hydroxy-2,3,4,5-tetrahydrodipicolinate + NADPH + H(+). Its pathway is amino-acid biosynthesis; L-lysine biosynthesis via DAP pathway; (S)-tetrahydrodipicolinate from L-aspartate: step 4/4. Functionally, catalyzes the conversion of 4-hydroxy-tetrahydrodipicolinate (HTPA) to tetrahydrodipicolinate. The chain is 4-hydroxy-tetrahydrodipicolinate reductase from Rhodopseudomonas palustris (strain BisB18).